The following is a 93-amino-acid chain: Large ribosomal subunit protein eL43 (93 aa).

Residues 39 to 60 form a C4-type zinc finger; sequence CEFCGKYGVKRKAVGIWGCKDC.

It belongs to the eukaryotic ribosomal protein eL43 family.

This Brassica rapa subsp. rapa (Turnip) protein is Large ribosomal subunit protein eL43 (RPL37A).